Reading from the N-terminus, the 872-residue chain is Facilitated trehalose transporter Tret1 (872 aa).

4 disordered regions span residues Met1–Lys40, Val53–Ser217, Ser262–Gln281, and Lys293–Ile315. The Cytoplasmic segment spans residues Met1–Tyr406. A compositionally biased stretch (gly residues) spans Gly8 to Gly22. 3 stretches are compositionally biased toward low complexity: residues Ser55–Thr68, Arg84–Arg98, and Pro121–Gln132. Residues Ser262, Ser263, and Ser264 each carry the phosphoserine modification. Ser334 and Ser336 each carry phosphoserine. The tract at residues Phe340 to Arg361 is disordered. Polar residues predominate over residues Arg344–Thr355. The helical transmembrane segment at Ile407–Val427 threads the bilayer. Residues Ser428–Ser454 are Extracellular-facing. Asn442 carries an N-linked (GlcNAc...) asparagine glycan. Residues Trp455 to Ile475 traverse the membrane as a helical segment. Residues Glu476–Ala488 lie on the Cytoplasmic side of the membrane. Residues Val489 to Leu509 form a helical membrane-spanning segment. At Gly510–Arg511 the chain is on the extracellular side. A helical membrane pass occupies residues Phe512–Thr532. Residues Val533–Arg538 lie on the Cytoplasmic side of the membrane. The helical transmembrane segment at Gly539–Ala559 threads the bilayer. Residues Gly560–Ser566 are Extracellular-facing. Residues Met567–Pro587 traverse the membrane as a helical segment. Over Glu588–Pro650 the chain is Cytoplasmic. Residues Leu651 to Phe671 traverse the membrane as a helical segment. Over Tyr672 to Asn687 the chain is Extracellular. A helical membrane pass occupies residues Val688 to Ile708. Topologically, residues Asp709–Lys714 are cytoplasmic. Residues Ile715–Phe735 traverse the membrane as a helical segment. Residues Tyr736–Cys755 are Extracellular-facing. A helical membrane pass occupies residues Phe756–Gly776. Over Glu777–Arg784 the chain is Cytoplasmic. Residues Gly785–Thr803 traverse the membrane as a helical segment. At Lys804–Tyr816 the chain is on the extracellular side. The chain crosses the membrane as a helical span at residues Gly817–Val837. Over Pro838 to Met872 the chain is Cytoplasmic. Residues Ser860 and Ser861 each carry the phosphoserine modification.

It belongs to the major facilitator superfamily. Sugar transporter (TC 2.A.1.1) family. Trehalose transporter subfamily.

The protein resides in the cell membrane. Its function is as follows. Low-capacity facilitative transporter for trehalose. Does not transport maltose, sucrose or lactose. Mediates the bidirectional transfer of trehalose. Responsible for the transport of trehalose synthesized in the fat body and the incorporation of trehalose into other tissues that require a carbon source, thereby regulating trehalose levels in the hemolymph. In Drosophila willistoni (Fruit fly), this protein is Facilitated trehalose transporter Tret1.